A 161-amino-acid chain; its full sequence is Endoribonuclease YbeY (161 aa).

Zn(2+)-binding residues include histidine 121, histidine 125, and histidine 131.

This sequence belongs to the endoribonuclease YbeY family. Requires Zn(2+) as cofactor.

The protein resides in the cytoplasm. In terms of biological role, single strand-specific metallo-endoribonuclease involved in late-stage 70S ribosome quality control and in maturation of the 3' terminus of the 16S rRNA. The polypeptide is Endoribonuclease YbeY (Xanthomonas euvesicatoria pv. vesicatoria (strain 85-10) (Xanthomonas campestris pv. vesicatoria)).